The primary structure comprises 358 residues: 3-isopropylmalate dehydrogenase (358 aa).

77–90 (GPKWDNLPIDQRPE) provides a ligand contact to NAD(+). Positions 98, 108, 137, and 221 each coordinate substrate. Positions 221, 245, and 249 each coordinate Mg(2+). NAD(+) is bound at residue 279–291 (GSAPDIAHLNIAN).

The protein belongs to the isocitrate and isopropylmalate dehydrogenases family. LeuB type 1 subfamily. Homodimer. It depends on Mg(2+) as a cofactor. Requires Mn(2+) as cofactor.

It localises to the cytoplasm. It carries out the reaction (2R,3S)-3-isopropylmalate + NAD(+) = 4-methyl-2-oxopentanoate + CO2 + NADH. The protein operates within amino-acid biosynthesis; L-leucine biosynthesis; L-leucine from 3-methyl-2-oxobutanoate: step 3/4. Its function is as follows. Catalyzes the oxidation of 3-carboxy-2-hydroxy-4-methylpentanoate (3-isopropylmalate) to 3-carboxy-4-methyl-2-oxopentanoate. The product decarboxylates to 4-methyl-2 oxopentanoate. This chain is 3-isopropylmalate dehydrogenase, found in Campylobacter jejuni (strain RM1221).